The following is a 94-amino-acid chain: Large ribosomal subunit protein bL27 (94 aa).

A propeptide spanning residues 1 to 9 (MLKLNLQFF) is cleaved from the precursor.

This sequence belongs to the bacterial ribosomal protein bL27 family. In terms of processing, the N-terminus is cleaved by ribosomal processing cysteine protease Prp.

The polypeptide is Large ribosomal subunit protein bL27 (Staphylococcus aureus (strain Mu3 / ATCC 700698)).